The following is a 246-amino-acid chain: Mast cell protease 2 (246 aa).

The N-terminal stretch at 1 to 19 (MHRPPLPLVLLLLCCRAQA) is a signal peptide. Positions 20–21 (GE) are cleaved as a propeptide — activation peptide. One can recognise a Peptidase S1 domain in the interval 22–244 (IIGGTESKPH…YRPWIDEVLK (223 aa)). Cysteines 51 and 67 form a disulfide. Catalysis depends on charge relay system residues H66 and D109. Residue N120 is glycosylated (N-linked (GlcNAc...) asparagine). Intrachain disulfides connect C143/C208 and C174/C187. The active-site Charge relay system is the S202.

The protein belongs to the peptidase S1 family. Granzyme subfamily.

The protein resides in the secreted. The protein localises to the cytoplasmic granule. Functionally, putative mast cell chymase. In Ovis aries (Sheep), this protein is Mast cell protease 2.